Consider the following 273-residue polypeptide: Putative pyruvate, phosphate dikinase regulatory protein (273 aa).

Gly-149–Thr-156 is a binding site for ADP.

It belongs to the pyruvate, phosphate/water dikinase regulatory protein family. PDRP subfamily.

It catalyses the reaction N(tele)-phospho-L-histidyl/L-threonyl-[pyruvate, phosphate dikinase] + ADP = N(tele)-phospho-L-histidyl/O-phospho-L-threonyl-[pyruvate, phosphate dikinase] + AMP + H(+). The catalysed reaction is N(tele)-phospho-L-histidyl/O-phospho-L-threonyl-[pyruvate, phosphate dikinase] + phosphate + H(+) = N(tele)-phospho-L-histidyl/L-threonyl-[pyruvate, phosphate dikinase] + diphosphate. Functionally, bifunctional serine/threonine kinase and phosphorylase involved in the regulation of the pyruvate, phosphate dikinase (PPDK) by catalyzing its phosphorylation/dephosphorylation. The protein is Putative pyruvate, phosphate dikinase regulatory protein of Rickettsia massiliae (strain Mtu5).